Here is a 161-residue protein sequence, read N- to C-terminus: MSKIKLISSDNEEFVVDQLIAERSMLIKNMLEDVGEINVPIPLPNVSSNVLRKVLEWCEHHKNDLYSGTEEESDIRLKKSTDIDEWDRKFMAVDQEMLFEIVLASNYLDIKPLLDTGCKTVANMIRGKSPEDIRKTFNIPNDFTPEEEEQIRKENEWAEDR.

The segment at 102 to 161 is interaction with the F-box domain of F-box proteins; the sequence is VLASNYLDIKPLLDTGCKTVANMIRGKSPEDIRKTFNIPNDFTPEEEEQIRKENEWAEDR.

Belongs to the SKP1 family. Essential component of the E3 ubiquitin ligase Skp1-Cullin-1-F-box (SCF) complex. Interacts with cul1, fbh1, mcs2, pip1, pof1, pof2, pof3, pof4, pof5, pof6, pof7, pof8, pof9, pof10, pof11, pof12, pof13, pof14, pop1, pop2 and tfb3. Forms a complex with pof6 and sip1. Component of the RAVE complex composed of rav1, rav2 and skp1.

The protein localises to the cytoplasm. It localises to the nucleus. In terms of biological role, required for cig2 degradation in the G2 and M phases of the cell cycle. Together with pof6, essential for septum processing and cell separation. Involved in mitotic progression, essential for the execution of anaphase B; required for coordinated structural alterations of mitotic spindles and segregation of nuclear membrane structures at anaphase. Involved in the DNA damage checkpoint pathway and maintenance of genome integrity. Component of the RAVE complex which is required for stable assembly of the vacuolar ATPase complex V-ATPase. The protein is Suppressor of kinetochore protein 1 of Schizosaccharomyces pombe (strain 972 / ATCC 24843) (Fission yeast).